The following is a 629-amino-acid chain: Smc-like protein Sph1 (629 aa).

Coiled-coil stretches lie at residues 139 to 282 and 318 to 487; these read LETE…LLDD and AETT…NQFD.

It belongs to the Sph1/Sph2 family.

It localises to the cytoplasm. Functionally, may play a role in a late step of replication. The sequence is that of Smc-like protein Sph1 (sph1) from Halobacterium salinarum (strain ATCC 29341 / DSM 671 / R1).